Consider the following 329-residue polypeptide: Protein-arginine N-acetylglucosaminyltransferase NleB1 (329 aa).

R13 carries N-beta-linked (GlcNAc) arginine; by autocatalysis glycosylation. Residue Q48–F50 participates in UDP-N-acetyl-alpha-D-glucosamine binding. Residue R53 is glycosylated (N-beta-linked (GlcNAc) arginine; by autocatalysis). Y72 serves as a coordination point for UDP-N-acetyl-alpha-D-glucosamine. An N-beta-linked (GlcNAc) arginine; by autocatalysis glycan is attached at R159. Y219–A222 lines the UDP-N-acetyl-alpha-D-glucosamine pocket. The short motif at D221–D223 is the DXD motif element. A Mn(2+)-binding site is contributed by D223. E253 (proton acceptor) is an active-site residue. R293 carries an N-beta-linked (GlcNAc) arginine; by autocatalysis glycan. Positions 320 and 322 each coordinate Mn(2+). Residues S322 and S327 to W329 contribute to the UDP-N-acetyl-alpha-D-glucosamine site.

Belongs to the glycosyltransferase NleB family. Mn(2+) serves as cofactor. In terms of processing, auto-glycosylated: arginine GlcNAcylation is required for activity toward death domain-containing host target proteins.

The protein localises to the secreted. Its subcellular location is the host cytoplasm. The enzyme catalyses L-arginyl-[protein] + UDP-N-acetyl-alpha-D-glucosamine = N(omega)-(N-acetyl-beta-D-glucosaminyl)-L-arginyl-[protein] + UDP + H(+). Its function is as follows. Protein-arginine N-acetylglucosaminyltransferase effector that disrupts TNF signaling in infected cells, including NF-kappa-B signaling, apoptosis and necroptosis. Acts by catalyzing the transfer of a single N-acetylglucosamine (GlcNAc) to a conserved arginine residue in the death domain of host proteins FADD, TRADD, FAS, TNFRSF1A/TNFR1, TNFRSF25/DR3 and RIPK1: arginine GlcNAcylation prevents homotypic/heterotypic death domain interactions and assembly of the oligomeric TNF-alpha receptor complex, thereby disrupting TNF signaling. Has preference for host FADD as substrate compared to other death domain-containing proteins. Also acts on host proteins without a death domain: catalyzes arginine GlcNAcylation of HIF1A, thereby regulating host glucose metabolism. Also displays intra-bacterial activity by mediating GlcNAcylation of glutathione synthetase GshB. Catalyzes auto-GlcNAcylation, which is required for activity toward death domain-containing host target proteins. Shows a higher enzymatic activity than NleB2. This Escherichia coli O127:H6 (strain E2348/69 / EPEC) protein is Protein-arginine N-acetylglucosaminyltransferase NleB1.